Consider the following 147-residue polypeptide: Hemoglobin subunit epsilon (147 aa).

The Globin domain occupies 3-147 (HFTAEEKVAI…VAIALGHKYH (145 aa)). Residues Ser-14 and Ser-51 each carry the phosphoserine modification. His-64 and His-93 together coordinate heme b.

It belongs to the globin family. In terms of assembly, heterotetramer of two alpha chains and two epsilon chains in early embryonic hemoglobin Gower-2; two zeta chains and two epsilon chains in early embryonic hemoglobin Gower-1. Red blood cells.

In terms of biological role, the epsilon chain is a beta-type chain of early mammalian embryonic hemoglobin. The polypeptide is Hemoglobin subunit epsilon (HBE1) (Cebus kaapori (Ka'apor capuchin)).